The following is a 470-amino-acid chain: Methylenetetrahydrofolate--tRNA-(uracil-5-)-methyltransferase TrmFO (470 aa).

10 to 15 (GAGLAG) provides a ligand contact to FAD.

It belongs to the MnmG family. TrmFO subfamily. FAD serves as cofactor.

It localises to the cytoplasm. It catalyses the reaction uridine(54) in tRNA + (6R)-5,10-methylene-5,6,7,8-tetrahydrofolate + NADH + H(+) = 5-methyluridine(54) in tRNA + (6S)-5,6,7,8-tetrahydrofolate + NAD(+). The catalysed reaction is uridine(54) in tRNA + (6R)-5,10-methylene-5,6,7,8-tetrahydrofolate + NADPH + H(+) = 5-methyluridine(54) in tRNA + (6S)-5,6,7,8-tetrahydrofolate + NADP(+). In terms of biological role, catalyzes the folate-dependent formation of 5-methyl-uridine at position 54 (M-5-U54) in all tRNAs. This chain is Methylenetetrahydrofolate--tRNA-(uracil-5-)-methyltransferase TrmFO, found in Prochlorococcus marinus (strain MIT 9301).